The primary structure comprises 932 residues: Protocadherin gamma-A2 (932 aa).

The first 28 residues, 1 to 28 (MAALQKLPHCRKLVLLCFLLATLWEARA), serve as a signal peptide directing secretion. 6 Cadherin domains span residues 29–133 (GQIR…APRF), 134–242 (GVEE…APVF), 243–347 (TQPE…APEF), 348–452 (YMTS…APAF), 453–562 (SRTS…APEI), and 570–682 (DGST…EPSA). The Extracellular segment spans residues 29–692 (GQIRYSVREE…IPNDSDLTLY (664 aa)). N-linked (GlcNAc...) asparagine glycans are attached at residues Asn-419 and Asn-545. Residue Asn-685 is glycosylated (N-linked (GlcNAc...) asparagine). A helical transmembrane segment spans residues 693-713 (LVVAVAAVSCVFLAFVIVLLA). The Cytoplasmic segment spans residues 714 to 932 (HRLRRWHKSR…KKKSGKKEKK (219 aa)). Disordered regions lie at residues 798–841 (LEEE…WPNN) and 902–932 (ATLT…KEKK). Residues 806–841 (FSQQAPPNTDWRFSQAQRPGTSGSQNGDDTGTWPNN) show a composition bias toward polar residues. Residues 922 to 932 (NKKKSGKKEKK) show a composition bias toward basic residues.

The protein resides in the cell membrane. Potential calcium-dependent cell-adhesion protein. May be involved in the establishment and maintenance of specific neuronal connections in the brain. The polypeptide is Protocadherin gamma-A2 (PCDHGA2) (Homo sapiens (Human)).